The following is a 410-amino-acid chain: Histidine--tRNA ligase (410 aa).

The protein belongs to the class-II aminoacyl-tRNA synthetase family.

It localises to the cytoplasm. The catalysed reaction is tRNA(His) + L-histidine + ATP = L-histidyl-tRNA(His) + AMP + diphosphate + H(+). In Methanoregula boonei (strain DSM 21154 / JCM 14090 / 6A8), this protein is Histidine--tRNA ligase.